Reading from the N-terminus, the 449-residue chain is Glucose-6-phosphate isomerase (449 aa).

E291 (proton donor) is an active-site residue. Residues H312 and K426 contribute to the active site.

The protein belongs to the GPI family.

The protein localises to the cytoplasm. It catalyses the reaction alpha-D-glucose 6-phosphate = beta-D-fructose 6-phosphate. It participates in carbohydrate biosynthesis; gluconeogenesis. It functions in the pathway carbohydrate degradation; glycolysis; D-glyceraldehyde 3-phosphate and glycerone phosphate from D-glucose: step 2/4. Functionally, catalyzes the reversible isomerization of glucose-6-phosphate to fructose-6-phosphate. The polypeptide is Glucose-6-phosphate isomerase (Streptococcus mutans serotype c (strain ATCC 700610 / UA159)).